Reading from the N-terminus, the 1042-residue chain is Carbamoyl phosphate synthase large chain (1042 aa).

The tract at residues Met1–Glu417 is carboxyphosphate synthetic domain. ATP is bound by residues Arg127, Arg182, Gly188, Gly189, Glu221, Ile223, Glu228, Gly254, Ile255, His256, Gln297, and Glu314. The 213-residue stretch at Arg131–Leu343 folds into the ATP-grasp 1 domain. Gln297, Glu314, and Asn316 together coordinate Mg(2+). Residues Gln297, Glu314, and Asn316 each contribute to the Mn(2+) site. The tract at residues Tyr418–Arg558 is oligomerization domain. The interval Ala559 to Ala947 is carbamoyl phosphate synthetic domain. In terms of domain architecture, ATP-grasp 2 spans Asn689–Ala880. ATP-binding residues include Arg725, Glu764, Leu766, Glu771, Gly796, Val797, His798, Ser799, Gln839, and Glu851. Mg(2+)-binding residues include Gln839, Glu851, and Asn853. Residues Gln839, Glu851, and Asn853 each contribute to the Mn(2+) site. One can recognise an MGS-like domain in the interval Ala947–Gly1042. Residues Pro948–Gly1042 are allosteric domain.

The protein belongs to the CarB family. Composed of two chains; the small (or glutamine) chain promotes the hydrolysis of glutamine to ammonia, which is used by the large (or ammonia) chain to synthesize carbamoyl phosphate. Tetramer of heterodimers (alpha,beta)4. Mg(2+) is required as a cofactor. Requires Mn(2+) as cofactor.

The enzyme catalyses hydrogencarbonate + L-glutamine + 2 ATP + H2O = carbamoyl phosphate + L-glutamate + 2 ADP + phosphate + 2 H(+). It carries out the reaction hydrogencarbonate + NH4(+) + 2 ATP = carbamoyl phosphate + 2 ADP + phosphate + 2 H(+). The protein operates within amino-acid biosynthesis; L-arginine biosynthesis; carbamoyl phosphate from bicarbonate: step 1/1. Its pathway is pyrimidine metabolism; UMP biosynthesis via de novo pathway; (S)-dihydroorotate from bicarbonate: step 1/3. Large subunit of the glutamine-dependent carbamoyl phosphate synthetase (CPSase). CPSase catalyzes the formation of carbamoyl phosphate from the ammonia moiety of glutamine, carbonate, and phosphate donated by ATP, constituting the first step of 2 biosynthetic pathways, one leading to arginine and/or urea and the other to pyrimidine nucleotides. The large subunit (synthetase) binds the substrates ammonia (free or transferred from glutamine from the small subunit), hydrogencarbonate and ATP and carries out an ATP-coupled ligase reaction, activating hydrogencarbonate by forming carboxy phosphate which reacts with ammonia to form carbamoyl phosphate. The protein is Carbamoyl phosphate synthase large chain of Halobacterium salinarum (strain ATCC 700922 / JCM 11081 / NRC-1) (Halobacterium halobium).